We begin with the raw amino-acid sequence, 150 residues long: Transcriptional regulator MraZ (150 aa).

SpoVT-AbrB domains are found at residues 6-52 (EFFN…PYQE) and 80-126 (AVEC…NRTK).

It belongs to the MraZ family. In terms of assembly, forms oligomers.

It is found in the cytoplasm. The protein resides in the nucleoid. The sequence is that of Transcriptional regulator MraZ from Syntrophotalea carbinolica (strain DSM 2380 / NBRC 103641 / GraBd1) (Pelobacter carbinolicus).